The sequence spans 483 residues: Glutamate--tRNA ligase (483 aa).

A 'HIGH' region motif is present at residues 9–19 (PSPTGFLHIGN). The short motif at 253–257 (KLSKR) is the 'KMSKS' region element. Lys-256 is a binding site for ATP.

The protein belongs to the class-I aminoacyl-tRNA synthetase family. Glutamate--tRNA ligase type 1 subfamily. As to quaternary structure, monomer.

Its subcellular location is the cytoplasm. The catalysed reaction is tRNA(Glu) + L-glutamate + ATP = L-glutamyl-tRNA(Glu) + AMP + diphosphate. Functionally, catalyzes the attachment of glutamate to tRNA(Glu) in a two-step reaction: glutamate is first activated by ATP to form Glu-AMP and then transferred to the acceptor end of tRNA(Glu). The polypeptide is Glutamate--tRNA ligase (Mycoplasma mycoides subsp. mycoides SC (strain CCUG 32753 / NCTC 10114 / PG1)).